The primary structure comprises 343 residues: Ubiquitin thioesterase OTU1 (343 aa).

The tract at residues 45–123 (RCKAKGGTHV…IVEEDQTRPK (79 aa)) is UBX-like. Residues 144–269 (LTRTAVPADN…GIHYDPLQRN (126 aa)) enclose the OTU domain. Residues 149-155 (VPADNSC) form a cys-loop region. Residue aspartate 152 is part of the active site. Catalysis depends on cysteine 155, which acts as the Nucleophile. Positions 208–218 (IRRDDTWGGAI) are variable-loop. Residues 258-262 (YDGIH) form a his-loop region. Isoleucine 261 serves as a coordination point for substrate. Residue histidine 262 is part of the active site. The tract at residues 286–291 (DIVLVQ) is S2 site. Residues 313-337 (LRCMLCQKGLTGQAEARDHARETGH) form a C2H2-type zinc finger. Histidine 337 is an active-site residue.

In terms of assembly, interacts with VCP; the interaction is direct. Interacts with FAF2/UBXD8. Interacts with DERL1; however interaction is dependent on the UBAX-like region, suggesting that it may be indirect. Interacts with PLAA, UBXN6 and VCP; may form a complex involved in macroautophagy.

It localises to the cytoplasm. It catalyses the reaction Thiol-dependent hydrolysis of ester, thioester, amide, peptide and isopeptide bonds formed by the C-terminal Gly of ubiquitin (a 76-residue protein attached to proteins as an intracellular targeting signal).. In terms of biological role, hydrolase that can remove conjugated ubiquitin from proteins and participates in endoplasmic reticulum-associated degradation (ERAD) for misfolded lumenal proteins. May act by triming the ubiquitin chain on the associated substrate to facilitate their threading through the VCP/p97 pore. Ubiquitin moieties on substrates may present a steric impediment to the threading process when the substrate is transferred to the VCP pore and threaded through VCP's axial channel. Mediates deubiquitination of 'Lys-27'-, 'Lys-29'- and 'Lys-33'-linked polyubiquitin chains. Also able to hydrolyze 'Lys-11'-linked ubiquitin chains. Cleaves both polyubiquitin and di-ubiquitin. May play a role in macroautophagy, regulating for instance the clearance of damaged lysosomes. May recruit PLAA, UBXN6 and VCP to damaged lysosome membranes decorated with K48-linked ubiquitin chains and remove these chains allowing autophagosome formation. The sequence is that of Ubiquitin thioesterase OTU1 (Yod1) from Rattus norvegicus (Rat).